A 105-amino-acid chain; its full sequence is Signal peptidase complex subunit 1 (105 aa).

At 1-32 (MDGMIAMLPAPLQKLSSHIDFQGQKVAERTYQ) the chain is on the cytoplasmic side. The helical transmembrane segment at 33–53 (VILTIAGIIGFLVGFWTQQLS) threads the bilayer. Topologically, residues 54-56 (YAM) are lumenal. Residues 57–77 (FTVLGASAFTALIILPPWPFL) traverse the membrane as a helical segment. Residues 78 to 105 (FRKNPIVWHTPAEPQESGDKKKETKKTK) are Cytoplasmic-facing.

It belongs to the SPCS1 family. As to quaternary structure, component of the signal peptidase complex (SPC) composed of a catalytic subunit sec-11 and three accessory subunits spcs-1, spcs-2 and spcs-3. The complex induces a local thinning of the ER membrane which is used to measure the length of the signal peptide (SP) h-region of protein substrates. This ensures the selectivity of the complex towards h-regions shorter than 18-20 amino acids.

The protein localises to the endoplasmic reticulum membrane. In terms of biological role, component of the signal peptidase complex (SPC) which catalyzes the cleavage of N-terminal signal sequences from nascent proteins as they are translocated into the lumen of the endoplasmic reticulum. Dispensable for SPC enzymatic activity. This chain is Signal peptidase complex subunit 1, found in Caenorhabditis elegans.